A 515-amino-acid chain; its full sequence is Serine/threonine-protein phosphatase PP-Z (515 aa).

Residues 1 to 186 form a disordered region; the sequence is MGQGSSKHAD…SSTDPDDPET (186 aa). Positions 17 to 30 are enriched in polar residues; sequence PSFSRSDTQGSIKS. At S18 the chain carries Phosphoserine. Over residues 40-51 the composition is skewed to basic and acidic residues; that stretch reads KGKDSNHDRRTS. Positions 63–74 are enriched in pro residues; it reads ETPPSLPPPPSP. Polar residues predominate over residues 91 to 109; that stretch reads DSGNSSQSPTSPHPSNQPA. The segment covering 126 to 143 has biased composition (low complexity); sequence SSSSYAVSPTSPTSPTSS. Mn(2+) is bound by residues D248, H250, D276, and N308. Catalysis depends on H309, which acts as the Proton donor. Residues H357 and H432 each contribute to the Mn(2+) site. Phosphoserine occurs at positions 505 and 514.

The protein belongs to the PPP phosphatase family. PP-Z subfamily. Requires Mn(2+) as cofactor.

It localises to the cytoplasm. It carries out the reaction O-phospho-L-seryl-[protein] + H2O = L-seryl-[protein] + phosphate. It catalyses the reaction O-phospho-L-threonyl-[protein] + H2O = L-threonyl-[protein] + phosphate. The protein is Serine/threonine-protein phosphatase PP-Z (pzh1) of Schizosaccharomyces pombe (strain 972 / ATCC 24843) (Fission yeast).